The following is a 104-amino-acid chain: Large ribosomal subunit protein uL24 (104 aa).

The protein belongs to the universal ribosomal protein uL24 family. Part of the 50S ribosomal subunit.

In terms of biological role, one of two assembly initiator proteins, it binds directly to the 5'-end of the 23S rRNA, where it nucleates assembly of the 50S subunit. Its function is as follows. One of the proteins that surrounds the polypeptide exit tunnel on the outside of the subunit. The protein is Large ribosomal subunit protein uL24 of Caulobacter sp. (strain K31).